Reading from the N-terminus, the 147-residue chain is D-aminoacyl-tRNA deacylase (147 aa).

The short motif at 137–138 (GP) is the Gly-cisPro motif, important for rejection of L-amino acids element.

Belongs to the DTD family. Homodimer.

It localises to the cytoplasm. The catalysed reaction is glycyl-tRNA(Ala) + H2O = tRNA(Ala) + glycine + H(+). It catalyses the reaction a D-aminoacyl-tRNA + H2O = a tRNA + a D-alpha-amino acid + H(+). In terms of biological role, an aminoacyl-tRNA editing enzyme that deacylates mischarged D-aminoacyl-tRNAs. Also deacylates mischarged glycyl-tRNA(Ala), protecting cells against glycine mischarging by AlaRS. Acts via tRNA-based rather than protein-based catalysis; rejects L-amino acids rather than detecting D-amino acids in the active site. By recycling D-aminoacyl-tRNA to D-amino acids and free tRNA molecules, this enzyme counteracts the toxicity associated with the formation of D-aminoacyl-tRNA entities in vivo and helps enforce protein L-homochirality. The polypeptide is D-aminoacyl-tRNA deacylase (Acinetobacter baumannii (strain ATCC 17978 / DSM 105126 / CIP 53.77 / LMG 1025 / NCDC KC755 / 5377)).